The following is a 98-amino-acid chain: Cobalt transport protein CbiN (98 aa).

The next 2 membrane-spanning stretches (helical) occupy residues 6–26 (VLMI…YSGL) and 68–88 (SLLF…FFGY).

This sequence belongs to the CbiN family. In terms of assembly, forms an energy-coupling factor (ECF) transporter complex composed of an ATP-binding protein (A component, CbiO), a transmembrane protein (T component, CbiQ) and 2 possible substrate-capture proteins (S components, CbiM and CbiN) of unknown stoichimetry.

The protein resides in the cell membrane. It participates in cofactor biosynthesis; adenosylcobalamin biosynthesis. Its function is as follows. Part of the energy-coupling factor (ECF) transporter complex CbiMNOQ involved in cobalt import. The protein is Cobalt transport protein CbiN of Methanococcus maripaludis (strain DSM 14266 / JCM 13030 / NBRC 101832 / S2 / LL).